A 548-amino-acid polypeptide reads, in one-letter code: Chaperonin GroEL (548 aa).

Residues 30 to 33, Lys-51, 87 to 91, Gly-415, 479 to 481, and Asp-495 each bind ATP; these read TLGP, DGTTT, and NAA.

Belongs to the chaperonin (HSP60) family. Forms a cylinder of 14 subunits composed of two heptameric rings stacked back-to-back. Interacts with the co-chaperonin GroES.

Its subcellular location is the cytoplasm. It carries out the reaction ATP + H2O + a folded polypeptide = ADP + phosphate + an unfolded polypeptide.. In terms of biological role, together with its co-chaperonin GroES, plays an essential role in assisting protein folding. The GroEL-GroES system forms a nano-cage that allows encapsulation of the non-native substrate proteins and provides a physical environment optimized to promote and accelerate protein folding. This chain is Chaperonin GroEL, found in Aliivibrio fischeri (strain MJ11) (Vibrio fischeri).